The chain runs to 224 residues: CMRF35-like molecule 6 (224 aa).

An N-terminal signal peptide occupies residues 1–20 (MTARAWASWRSSALLLLLVP). At 21 to 183 (GYFPLSHPMT…HPGSLFSNVR (163 aa)) the chain is on the extracellular side. The region spanning 22–130 (YFPLSHPMTV…HDPIVEVEVS (109 aa)) is the Ig-like V-type domain. 2 disulfide bridges follow: cysteine 43–cysteine 110 and cysteine 57–cysteine 65. 2 N-linked (GlcNAc...) asparagine glycosylation sites follow: asparagine 90 and asparagine 99. The segment covering 136–151 (TTTASSPQSSMGTSGP) has biased composition (polar residues). The interval 136–174 (TTTASSPQSSMGTSGPPTKLPVHTWPSVTRKDSPEPSPH) is disordered. Residues 184 to 204 (FLLLVLLELPLLLSMLGAVLW) form a helical membrane-spanning segment. The Cytoplasmic segment spans residues 205 to 224 (VNRPQRSSRSRQNWPKGENQ).

Belongs to the CD300 family. Present on the surface of monocytes, neutrophils, a proportion of peripheral blood T- and B-lymphocytes and lymphocytic cell lines.

The protein resides in the cell membrane. This chain is CMRF35-like molecule 6 (CD300C), found in Homo sapiens (Human).